A 553-amino-acid chain; its full sequence is MTKYVFVTGGVVSSLGKGIAAASLAAILESRGLKVTLLKLDPYINVDPGTMSPFQHGEVFVTEDGAETDLDLGHYERFISTKMRKANNFTTGQIYESVIRKERRGDYLGKTVQVIPHITNEIQAFIERGAASATCGEPDVAIVEIGGTVGDIESLPFLEAARQMSLRLGRNSACFVHLTLVPFIATAGELKTKPTQHSVQKLREIGISPHVLLCRADRPIPDDESKKISLFSNVPEDAVISVWDVDSIYKIPQMLHDQGLDRLICEELRLDPQPADLRMWAALVEKLQNPKHEVTIGMVGKYVDLTESYKSLIEALRHASIHTSTKVNIEYIDSEELETNGTASLAHLDAVLVPGGFGRRGTEGKIAAVRYAREAKVPYLGICLGMQLAVIEFARDVVGLKQANSTEFDPNTPERVVALITEWYDREGKVEKRTEDSDLGGTMRLGSQRCPIKPGTLAEAIYGKDVNERHRHRYEVNNRFVPQLEAGGLVISARTPSEDLPEMMELPSTMHPWFVGVQFHPEFTSTPRDGHPLFKSFVQAALACQQTRAGAKA.

The segment at 1 to 270 is amidoligase domain; that stretch reads MTKYVFVTGG…DRLICEELRL (270 aa). Ser-13 is a binding site for CTP. UTP is bound at residue Ser-13. ATP contacts are provided by residues 14–19 and Asp-71; that span reads SLGKGI. Mg(2+) is bound by residues Asp-71 and Glu-144. CTP-binding positions include 151-153, 191-196, and Lys-227; these read DIE and KTKPTQ. UTP-binding positions include 191-196 and Lys-227; that span reads KTKPTQ. The 253-residue stretch at 295–547 folds into the Glutamine amidotransferase type-1 domain; it reads TIGMVGKYVD…VQAALACQQT (253 aa). Position 356 (Gly-356) interacts with L-glutamine. Cys-383 functions as the Nucleophile; for glutamine hydrolysis in the catalytic mechanism. L-glutamine-binding positions include 384 to 387, Glu-407, and Arg-473; that span reads LGMQ. Catalysis depends on residues His-520 and Glu-522.

It belongs to the CTP synthase family. In terms of assembly, homotetramer.

The enzyme catalyses UTP + L-glutamine + ATP + H2O = CTP + L-glutamate + ADP + phosphate + 2 H(+). The catalysed reaction is L-glutamine + H2O = L-glutamate + NH4(+). It catalyses the reaction UTP + NH4(+) + ATP = CTP + ADP + phosphate + 2 H(+). The protein operates within pyrimidine metabolism; CTP biosynthesis via de novo pathway; CTP from UDP: step 2/2. Its activity is regulated as follows. Allosterically activated by GTP, when glutamine is the substrate; GTP has no effect on the reaction when ammonia is the substrate. The allosteric effector GTP functions by stabilizing the protein conformation that binds the tetrahedral intermediate(s) formed during glutamine hydrolysis. Inhibited by the product CTP, via allosteric rather than competitive inhibition. Functionally, catalyzes the ATP-dependent amination of UTP to CTP with either L-glutamine or ammonia as the source of nitrogen. Regulates intracellular CTP levels through interactions with the four ribonucleotide triphosphates. The chain is CTP synthase from Burkholderia mallei (strain NCTC 10247).